Consider the following 490-residue polypeptide: Proline--tRNA ligase (490 aa).

The protein belongs to the class-II aminoacyl-tRNA synthetase family. ProS type 3 subfamily. Homodimer.

The protein localises to the cytoplasm. It carries out the reaction tRNA(Pro) + L-proline + ATP = L-prolyl-tRNA(Pro) + AMP + diphosphate. In terms of biological role, catalyzes the attachment of proline to tRNA(Pro) in a two-step reaction: proline is first activated by ATP to form Pro-AMP and then transferred to the acceptor end of tRNA(Pro). This is Proline--tRNA ligase from Salinibacter ruber (strain DSM 13855 / M31).